We begin with the raw amino-acid sequence, 126 residues long: UPF0332 protein glr0978 (126 aa).

The protein belongs to the UPF0332 family.

In Gloeobacter violaceus (strain ATCC 29082 / PCC 7421), this protein is UPF0332 protein glr0978.